A 417-amino-acid polypeptide reads, in one-letter code: Serine hydroxymethyltransferase 1 (417 aa).

Residues leucine 121 and 125–127 each bind (6S)-5,6,7,8-tetrahydrofolate; that span reads GHL. At lysine 229 the chain carries N6-(pyridoxal phosphate)lysine. (6S)-5,6,7,8-tetrahydrofolate is bound at residue 354–356; sequence SPF.

The protein belongs to the SHMT family. In terms of assembly, homodimer. Pyridoxal 5'-phosphate serves as cofactor.

The protein resides in the cytoplasm. The enzyme catalyses (6R)-5,10-methylene-5,6,7,8-tetrahydrofolate + glycine + H2O = (6S)-5,6,7,8-tetrahydrofolate + L-serine. Its pathway is one-carbon metabolism; tetrahydrofolate interconversion. It participates in amino-acid biosynthesis; glycine biosynthesis; glycine from L-serine: step 1/1. Catalyzes the reversible interconversion of serine and glycine with tetrahydrofolate (THF) serving as the one-carbon carrier. This reaction serves as the major source of one-carbon groups required for the biosynthesis of purines, thymidylate, methionine, and other important biomolecules. Also exhibits THF-independent aldolase activity toward beta-hydroxyamino acids, producing glycine and aldehydes, via a retro-aldol mechanism. The polypeptide is Serine hydroxymethyltransferase 1 (Pseudomonas fluorescens (strain ATCC BAA-477 / NRRL B-23932 / Pf-5)).